A 300-amino-acid chain; its full sequence is Ribosomal RNA small subunit methyltransferase H (300 aa).

S-adenosyl-L-methionine is bound by residues 46–48, Asp-65, Phe-92, Asp-107, and Gln-114; that span reads GGH.

This sequence belongs to the methyltransferase superfamily. RsmH family.

The protein resides in the cytoplasm. It carries out the reaction cytidine(1402) in 16S rRNA + S-adenosyl-L-methionine = N(4)-methylcytidine(1402) in 16S rRNA + S-adenosyl-L-homocysteine + H(+). In terms of biological role, specifically methylates the N4 position of cytidine in position 1402 (C1402) of 16S rRNA. The protein is Ribosomal RNA small subunit methyltransferase H of Prochlorococcus marinus subsp. pastoris (strain CCMP1986 / NIES-2087 / MED4).